Here is a 204-residue protein sequence, read N- to C-terminus: Ribonuclease HII (204 aa).

Residues Val14–Leu203 enclose the RNase H type-2 domain. A divalent metal cation-binding residues include Asp20, Glu21, and Asp112.

The protein belongs to the RNase HII family. Mn(2+) is required as a cofactor. Requires Mg(2+) as cofactor.

It is found in the cytoplasm. It catalyses the reaction Endonucleolytic cleavage to 5'-phosphomonoester.. Functionally, endonuclease that specifically degrades the RNA of RNA-DNA hybrids. The sequence is that of Ribonuclease HII from Thiobacillus denitrificans (strain ATCC 25259 / T1).